The primary structure comprises 345 residues: Papain (345 aa).

Residues 1–18 form the signal peptide; sequence MAMIPSISKLLFVAICLF. Positions 19-133 are cleaved as a propeptide — activation peptide; the sequence is VYMGLSFGDF…EEVLNDGDVN (115 aa). Disulfide bonds link cysteine 155–cysteine 196, cysteine 189–cysteine 228, and cysteine 286–cysteine 333. Cysteine 158 is an active-site residue. An E64-binding site is contributed by cysteine 158. Cysteine 158 lines the leupeptin pocket. Catalysis depends on residues histidine 292 and asparagine 308.

Belongs to the peptidase C1 family.

The catalysed reaction is Hydrolysis of proteins with broad specificity for peptide bonds, but preference for an amino acid bearing a large hydrophobic side chain at the P2 position. Does not accept Val in P1'.. With respect to regulation, repressed by the active-site-directed cysteine protease inhibitor E64 (L-trans-epoxysuccinyl-leucylamide-(4-guanido)-butane) produced by Aspergillus japonicus. Inhibited by the inhibitor of cysteine proteases from Trypanosoma brucei (TbICP, rhodesain) and Colocasia esculenta cv. Kaohsiung no. 1 (CeCPI, tarocystatin). Repressed by leupeptin, a peptidic cysteine, serine and threonine protease inhibitor. Its function is as follows. Cysteine proteinase with a high level of diversity in substrate specificity, an amino acid bearing a large hydrophobic side chain at the P2 position is preferred. The protein is Papain of Carica papaya (Papaya).